The chain runs to 538 residues: Importin subunit alpha-6 (538 aa).

One can recognise an IBB domain in the interval 1-58 (MSYKPSAKTEVRRNRYKVSVDADEGRRRREDNMVEIRKNKREENLQKKRREGFNPSMA). The interval 1-69 (MSYKPSAKTE…QPGQDFSSSL (69 aa)) is disordered. The span at 7 to 46 (AKTEVRRNRYKVSVDADEGRRRREDNMVEIRKNKREENLQ) shows a compositional bias: basic and acidic residues. Positions 56–69 (SMASQPGQDFSSSL) are enriched in polar residues. ARM repeat units follow at residues 109–149 (NPPI…NIAS), 152–191 (SENT…NVAG), 194–234 (PKCR…NFCR), 236–275 (KPQP…YLSD), 278–317 (NEKI…NIVT), 320–360 (DIQT…NITA), 363–402 (TSQI…NATS), and 406–445 (HDQI…NILK).

This sequence belongs to the importin alpha family. As to quaternary structure, forms a complex with importin subunit beta-1.

It localises to the nucleus envelope. Binds to conventional NLS motifs and mediates nuclear protein import across the nuclear envelope. Acts as a cellular receptor for the nuclear import of the virD2 protein of Agrobacterium, but is not essential for Agrobacterium-mediated root transformation. This Arabidopsis thaliana (Mouse-ear cress) protein is Importin subunit alpha-6.